The sequence spans 100 residues: Toxin Rv0299 (100 aa).

In terms of biological role, toxic component of a type II toxin-antitoxin (TA) system. Upon expression in M.smegmatis inhibits colony formation. Its toxic effect is neutralized by coexpression with cognate antitoxin Rv0298/MT0312. The sequence is that of Toxin Rv0299 from Mycobacterium tuberculosis (strain ATCC 25618 / H37Rv).